Consider the following 364-residue polypeptide: Aminomethyltransferase (364 aa).

This sequence belongs to the GcvT family. In terms of assembly, the glycine cleavage system is composed of four proteins: P, T, L and H.

It carries out the reaction N(6)-[(R)-S(8)-aminomethyldihydrolipoyl]-L-lysyl-[protein] + (6S)-5,6,7,8-tetrahydrofolate = N(6)-[(R)-dihydrolipoyl]-L-lysyl-[protein] + (6R)-5,10-methylene-5,6,7,8-tetrahydrofolate + NH4(+). Its function is as follows. The glycine cleavage system catalyzes the degradation of glycine. The protein is Aminomethyltransferase of Salmonella arizonae (strain ATCC BAA-731 / CDC346-86 / RSK2980).